Consider the following 535-residue polypeptide: Dimethylaniline monooxygenase [N-oxide-forming] 2 (535 aa).

A2 carries the post-translational modification N-acetylalanine. FAD is bound by residues 9 to 13, E32, 40 to 41, and 61 to 62; these read GAGVS, VW, and NT. Residues 60-61 and 195-198 contribute to the NADP(+) site; these read TN and SGSD. Residue K492 forms a Glycyl lysine isopeptide (Lys-Gly) (interchain with G-Cter in SUMO) linkage. A helical transmembrane segment spans residues 510-530; sequence FSVSFLLKILGLLAVVVAFFC.

Belongs to the FMO family. Requires FAD as cofactor. Mg(2+) is required as a cofactor.

The protein resides in the microsome membrane. The protein localises to the endoplasmic reticulum membrane. In terms of biological role, catalyzes the oxidative metabolism of numerous xenobiotics, including mainly therapeutic drugs and insecticides that contain a soft nucleophile, most commonly nitrogen and sulfur and participates to their bioactivation. The polypeptide is Dimethylaniline monooxygenase [N-oxide-forming] 2 (Pan troglodytes (Chimpanzee)).